A 292-amino-acid polypeptide reads, in one-letter code: MKSEAKDGEEESLQTAFKKLRVDASGSIASLSVGEGTGVRAPVRTATDDTKPKTTCASKDSWHGSTRKSSRGVVRTQRRRRSKSPVLHPPKFIHCSTIASSSSSQLKHKSQTDSPDGSSGLGISSPKEFSAGESSASLDANHTGAVVEPLRTSVPRLPSESKKEDSSDATQVSQASLKASDLSDFQSVSKLNQGTPCTCIGKECQCKRWHDMEVYSFSGLQSVPPLAPERRSTLEDYSQSLHARTLSGSPRSCSEQARVFVDDVTIEDLSGYMEYYLYIPKKMSHMAEMMYT.

The segment at 27–175 (SIASLSVGEG…SSDATQVSQA (149 aa)) is disordered. Over residues 65 to 83 (STRKSSRGVVRTQRRRRSK) the composition is skewed to basic residues. 2 positions are modified to phosphothreonine: T143 and T233.

The protein is Oxidative stress-responsive serine-rich protein 1 (OSER1) of Pongo abelii (Sumatran orangutan).